Consider the following 318-residue polypeptide: Deoxyribose-phosphate aldolase (318 aa).

D155 functions as the Proton donor/acceptor in the catalytic mechanism. The Schiff-base intermediate with acetaldehyde role is filled by K218. K254 acts as the Proton donor/acceptor in catalysis.

The protein belongs to the DeoC/FbaB aldolase family. DeoC type 2 subfamily. In terms of assembly, interacts with YBX1. As to expression, mainly expressed in liver, lung and colon.

It is found in the cytoplasm. Its subcellular location is the cytoplasmic granule. It localises to the nucleus. The catalysed reaction is 2-deoxy-D-ribose 5-phosphate = D-glyceraldehyde 3-phosphate + acetaldehyde. It functions in the pathway carbohydrate degradation; 2-deoxy-D-ribose 1-phosphate degradation; D-glyceraldehyde 3-phosphate and acetaldehyde from 2-deoxy-alpha-D-ribose 1-phosphate: step 2/2. In terms of biological role, catalyzes a reversible aldol reaction between acetaldehyde and D-glyceraldehyde 3-phosphate to generate 2-deoxy-D-ribose 5-phosphate. Participates in stress granule (SG) assembly. May allow ATP production from extracellular deoxyinosine in conditions of energy deprivation. The sequence is that of Deoxyribose-phosphate aldolase (DERA) from Homo sapiens (Human).